The chain runs to 159 residues: 6,7-dimethyl-8-ribityllumazine synthase (159 aa).

Residues tryptophan 26, 58–60, and 80–82 each bind 5-amino-6-(D-ribitylamino)uracil; these read SFE and VVI. 85 to 86 provides a ligand contact to (2S)-2-hydroxy-3-oxobutyl phosphate; it reads GT. Catalysis depends on histidine 88, which acts as the Proton donor. Phenylalanine 113 is a 5-amino-6-(D-ribitylamino)uracil binding site. Arginine 127 lines the (2S)-2-hydroxy-3-oxobutyl phosphate pocket.

It belongs to the DMRL synthase family.

It catalyses the reaction (2S)-2-hydroxy-3-oxobutyl phosphate + 5-amino-6-(D-ribitylamino)uracil = 6,7-dimethyl-8-(1-D-ribityl)lumazine + phosphate + 2 H2O + H(+). Its pathway is cofactor biosynthesis; riboflavin biosynthesis; riboflavin from 2-hydroxy-3-oxobutyl phosphate and 5-amino-6-(D-ribitylamino)uracil: step 1/2. In terms of biological role, catalyzes the formation of 6,7-dimethyl-8-ribityllumazine by condensation of 5-amino-6-(D-ribitylamino)uracil with 3,4-dihydroxy-2-butanone 4-phosphate. This is the penultimate step in the biosynthesis of riboflavin. This chain is 6,7-dimethyl-8-ribityllumazine synthase, found in Renibacterium salmoninarum (strain ATCC 33209 / DSM 20767 / JCM 11484 / NBRC 15589 / NCIMB 2235).